The sequence spans 327 residues: Olfactory receptor 6A2 (327 aa).

The Extracellular segment spans residues Met1 to Val26. N-linked (GlcNAc...) asparagine glycosylation is present at Asn5. A helical membrane pass occupies residues Leu27 to Ile47. The Cytoplasmic portion of the chain corresponds to Met48–Thr55. Residues Leu56–Thr76 form a helical membrane-spanning segment. The Extracellular segment spans residues Val77–Thr104. Cys102 and Cys194 are joined by a disulfide. The chain crosses the membrane as a helical span at residues Gln105–Tyr125. Residues Asp126–Arg144 lie on the Cytoplasmic side of the membrane. The helical transmembrane segment at Leu145–Val165 threads the bilayer. Residues Phe166–Glu201 lie on the Extracellular side of the membrane. Asn191 is a glycosylation site (N-linked (GlcNAc...) asparagine). The helical transmembrane segment at Leu202–Ser222 threads the bilayer. Over Tyr223–Ala242 the chain is Cytoplasmic. A helical transmembrane segment spans residues Phe243–Ile263. Residues Tyr264–Asn276 lie on the Extracellular side of the membrane. A helical membrane pass occupies residues Lys277–Leu297. The Cytoplasmic portion of the chain corresponds to Arg298–Val327.

It belongs to the G-protein coupled receptor 1 family.

The protein resides in the cell membrane. Odorant receptor. The sequence is that of Olfactory receptor 6A2 (OR6A2) from Homo sapiens (Human).